The sequence spans 804 residues: Leucine--tRNA ligase (804 aa).

Residues 39–50 (PYPSGAGLHVGH) carry the 'HIGH' region motif. The short motif at 580 to 584 (KMSKS) is the 'KMSKS' region element. Residue K583 coordinates ATP.

This sequence belongs to the class-I aminoacyl-tRNA synthetase family.

The protein resides in the cytoplasm. It carries out the reaction tRNA(Leu) + L-leucine + ATP = L-leucyl-tRNA(Leu) + AMP + diphosphate. The protein is Leucine--tRNA ligase of Mycoplasma mycoides subsp. mycoides SC (strain CCUG 32753 / NCTC 10114 / PG1).